Reading from the N-terminus, the 483-residue chain is Probable glycine dehydrogenase (decarboxylating) subunit 2 (483 aa).

A disordered region spans residues 1-33 (MLIFEHSRKNRRNYSQAPATRPAKNNIPDHLKR). Position 264 is an N6-(pyridoxal phosphate)lysine (lysine 264).

The protein belongs to the GcvP family. C-terminal subunit subfamily. The glycine cleavage system is composed of four proteins: P, T, L and H. In this organism, the P 'protein' is a heterodimer of two subunits. It depends on pyridoxal 5'-phosphate as a cofactor.

The enzyme catalyses N(6)-[(R)-lipoyl]-L-lysyl-[glycine-cleavage complex H protein] + glycine + H(+) = N(6)-[(R)-S(8)-aminomethyldihydrolipoyl]-L-lysyl-[glycine-cleavage complex H protein] + CO2. In terms of biological role, the glycine cleavage system catalyzes the degradation of glycine. The P protein binds the alpha-amino group of glycine through its pyridoxal phosphate cofactor; CO(2) is released and the remaining methylamine moiety is then transferred to the lipoamide cofactor of the H protein. The protein is Probable glycine dehydrogenase (decarboxylating) subunit 2 of Nitrosomonas europaea (strain ATCC 19718 / CIP 103999 / KCTC 2705 / NBRC 14298).